Consider the following 150-residue polypeptide: Transthyretin (150 aa).

The first 20 residues, 1–20 (MAFHSTLLVFLAGLVFLSEA), serve as a signal peptide directing secretion. C33 is modified (sulfocysteine). K38, E77, and S140 together coordinate L-thyroxine.

The protein belongs to the transthyretin family. In terms of assembly, homotetramer. Dimer of dimers. In the homotetramer, subunits assemble around a central channel that can accommodate two ligand molecules. Post-translationally, sulfonation of the reactive cysteine Cys-33 enhances the stability of the native conformation of TTR, avoiding misassembly of the protein leading to amyloid formation. Detected in serum (at protein level). Detected in liver and choroid plexus.

Its subcellular location is the secreted. In terms of biological role, thyroid hormone-binding protein. Probably transports thyroxine from the bloodstream to the brain. This chain is Transthyretin (TTR), found in Gallus gallus (Chicken).